The chain runs to 259 residues: Light-harvesting complex stress-related protein 3.1, chloroplastic (259 aa).

Residues 1-45 (MLANVVSRKASGLRQTPARATVAVKSVSGRRTTAAEPQTAAPVAA) constitute a chloroplast transit peptide. Tyr51 contributes to the chlorophyll b binding site. Chlorophyll a-binding residues include Phe66, Glu87, and His90. Arg92 serves as a coordination point for chlorophyll b. A helical transmembrane segment spans residues 93-113 (VAMLAALGFVVGEQLQDFPLF). Gln130 contacts chlorophyll a. Residues 137-157 (EPLLIAIGVAESYRVAVGWAT) traverse the membrane as a helical segment. 2 residues coordinate chlorophyll b: Glu147 and Arg150. The chlorophyll a site is built by Lys196, Glu197, Asn200, Arg202, and Gln214. A helical transmembrane segment spans residues 203–223 (LAMIAIAAFVAQELVEQTEIF).

Belongs to the light-harvesting chlorophyll a/b-binding (LHC) protein family. As to quaternary structure, interacts with the photosystem II-light-harvesting complex II (PSII-LHCII) supercomplex to form PSII-LHCII-LHCSR3 supercomplex.

The protein resides in the plastid. It localises to the chloroplast thylakoid membrane. Functionally, required for non-photochemical quenching (NPQ), a mechanism that converts and dissipates the harmful excess absorbed light energy into heat and protect the photosynthetic apparatus from photo-oxidative damage. NPQ includes dissipating excess light energy to heat (qE) and the reversible coupling of LHCII to photosystems (state transitions or qT), which are considered separate NPQ mechanisms. Is responsible for most of the excess light energy to heat dissipation (qE), also known as energy-dependent chlorophyll fluorescence quenching activity of chlorophyll excited states. Involved in a de-coupling and re-coupling of energy transfer to photosystem II (PSII) during qT. Binds chlorophyll a and b. Is able to sense luminal acidification of the thylakoid membranes, which occurs along with elevated electron flow caused by excess light. Establishes interactions with photosystem II (PSII) antenna components upon lumen acidification, and protonation of lumen-exposed, negatively charged residues both in LHCSR3 and in PSII antenna components. Mediates excitation energy transfer from light-harvesting complex II (LHCII) to photosystem I (PSI), rather than photosystem II (PSII), at low pH, which mimics the acidified lumen of the thylakoid membranes in high light-exposed chloroplasts. Activates PSI-dependent fluorescence quenching in addition to dissipating excitation energy in LHCII to avoid photooxidative stress under excess light. Contributes with PGRL1 to the regulation of electron flow upstream of photosystem I (PSI), and limits the accumulation of electrons on the PSI acceptor side, thus avoiding PSI photoinhibition. This Chlamydomonas reinhardtii (Chlamydomonas smithii) protein is Light-harvesting complex stress-related protein 3.1, chloroplastic.